The following is a 218-amino-acid chain: Thiopurine S-methyltransferase (218 aa).

Positions 10, 45, 66, and 123 each coordinate S-adenosyl-L-methionine.

Belongs to the class I-like SAM-binding methyltransferase superfamily. TPMT family.

It localises to the cytoplasm. The catalysed reaction is S-adenosyl-L-methionine + a thiopurine = S-adenosyl-L-homocysteine + a thiopurine S-methylether.. In Shewanella baltica (strain OS155 / ATCC BAA-1091), this protein is Thiopurine S-methyltransferase.